The chain runs to 129 residues: DNA-directed RNA polymerase II subunit RPB9 (129 aa).

Residues cysteine 21, cysteine 24, cysteine 43, cysteine 46, cysteine 90, cysteine 93, cysteine 118, and cysteine 123 each coordinate Zn(2+). The C4-type zinc finger occupies 21 to 46; the sequence is CQECNNMLYPKEDKENKILLYACRNC. The TFIIS-type zinc finger occupies 86–128; sequence EDHACPKCSHREAVFFQAQTRRAEEEMRLYYVCTNQNCTHRWT.

Belongs to the archaeal RpoM/eukaryotic RPA12/RPB9/RPC11 RNA polymerase family. Component of the RNA polymerase II (Pol II) complex consisting of 12 subunits.

The protein resides in the nucleus. It localises to the nucleolus. In terms of biological role, DNA-dependent RNA polymerase catalyzes the transcription of DNA into RNA using the four ribonucleoside triphosphates as substrates. Component of RNA polymerase II which synthesizes mRNA precursors and many functional non-coding RNAs. Pol II is the central component of the basal RNA polymerase II transcription machinery. It is composed of mobile elements that move relative to each other. RPB9 is part of the upper jaw surrounding the central large cleft and thought to grab the incoming DNA template. The sequence is that of DNA-directed RNA polymerase II subunit RPB9 from Drosophila melanogaster (Fruit fly).